The primary structure comprises 415 residues: JmjC domain-containing protein C (415 aa).

The interval 97-140 (NEKNNQSNNNNNNNNNNNNNNNNNNNNNNNNNNNNNNNNNNKPK) is disordered. Residues 104 to 137 (NNNNNNNNNNNNNNNNNNNNNNNNNNNNNNNNNN) show a composition bias toward low complexity. The JmjC domain occupies 127 to 302 (NNNNNNNNNN…ELLKSNKLWC (176 aa)).

The chain is JmjC domain-containing protein C (jcdC) from Dictyostelium discoideum (Social amoeba).